Consider the following 1219-residue polypeptide: Pleckstrin homology domain-containing family G member 3 (1219 aa).

Residues 1-10 show a composition bias toward polar residues; the sequence is MPVSTSLHQD. A disordered region spans residues 1–66; that stretch reads MPVSTSLHQD…HLPNSNNNSS (66 aa). The span at 18–46 shows a compositional bias: low complexity; the sequence is SLTSTTSSSGSSCDSRSAMEEPSSSEAPA. At serine 76 the chain carries Phosphoserine. A DH domain is found at 93-272; sequence YLGRVVREIV…TCVAWYINDM (180 aa). The 99-residue stretch at 296–394 folds into the PH domain; it reads DLTTYGELVL…WTHHIKRLIL (99 aa). Over residues 431–442 the composition is skewed to polar residues; the sequence is WSSQDEVSTNVR. Disordered stretches follow at residues 431 to 599 and 613 to 708; these read WSSQ…PSVL and FSRR…KESA. A Phosphoserine modification is found at serine 433. The segment covering 446-463 has biased composition (basic and acidic residues); that stretch reads RQSEPTKHLLRQLNEKAR. Serine 576, serine 577, serine 618, serine 631, serine 640, serine 643, and serine 647 each carry phosphoserine. Residues 630–645 show a composition bias toward low complexity; sequence GSPRLVSRSSSVLSLE. A compositionally biased stretch (basic and acidic residues) spans 696 to 708; that stretch reads EPDRSSCKKKESA. Phosphoserine occurs at positions 741, 779, and 827. Disordered stretches follow at residues 756-780, 821-840, 859-878, 955-1133, and 1146-1207; these read RFNS…VGSR, MESS…ANGF, EESA…RSPA, APER…LYVT, and VMEK…RVRN. Positions 826-836 are enriched in gly residues; sequence GSPGKGPGQGQ. The span at 859–873 shows a compositional bias: low complexity; it reads EESATASPESSSPTE. Phosphoserine is present on residues serine 962, serine 1011, serine 1023, serine 1037, and serine 1040. Over residues 1020 to 1029 the composition is skewed to polar residues; the sequence is SAVSQRTTSP. Residues 1049-1065 are compositionally biased toward basic and acidic residues; the sequence is DVRELCSKYASRDEARR. Serine 1081 carries the post-translational modification Phosphoserine. The residue at position 1107 (arginine 1107) is an Omega-N-methylarginine. Positions 1187–1197 are enriched in basic and acidic residues; it reads QPKEEGSRDPA.

The protein localises to the cytoplasm. It is found in the cytoskeleton. In terms of biological role, plays a role in controlling cell polarity and cell motility by selectively binding newly polymerized actin and activating RAC1 and CDC42 to enhance local actin polymerization. This chain is Pleckstrin homology domain-containing family G member 3, found in Homo sapiens (Human).